A 363-amino-acid polypeptide reads, in one-letter code: Mitogen-activated protein kinase 4 (363 aa).

The Protein kinase domain occupies 30-318 (YDLVKVVGFG…AKQVMEHPYF (289 aa)). Residues 36-44 (VGFGACGTV) and lysine 59 each bind ATP. Aspartate 156 (proton acceptor) is an active-site residue. Residues serine 186 and serine 187 each carry the phosphoserine modification. At threonine 190 the chain carries Phosphothreonine; by MKK5. Positions 190-192 (TQY) match the TQY motif. The residue at position 192 (tyrosine 192) is a Phosphotyrosine; by MKK5.

This sequence belongs to the protein kinase superfamily. CMGC Ser/Thr protein kinase family. MAP kinase subfamily. It depends on Mg(2+) as a cofactor. In terms of processing, dually phosphorylated on Thr-190 and Tyr-192, which activates the enzyme.

The enzyme catalyses L-seryl-[protein] + ATP = O-phospho-L-seryl-[protein] + ADP + H(+). The catalysed reaction is L-threonyl-[protein] + ATP = O-phospho-L-threonyl-[protein] + ADP + H(+). In terms of biological role, essential for the two main proliferating life stages, the promastigotes and amastigotes, of the parasite. This is Mitogen-activated protein kinase 4 from Leishmania mexicana.